Reading from the N-terminus, the 331-residue chain is DNA-directed RNA polymerase subunit alpha (331 aa).

The tract at residues M1 to N226 is alpha N-terminal domain (alpha-NTD). An alpha C-terminal domain (alpha-CTD) region spans residues L243–N331.

This sequence belongs to the RNA polymerase alpha chain family. As to quaternary structure, homodimer. The RNAP catalytic core consists of 2 alpha, 1 beta, 1 beta' and 1 omega subunit. When a sigma factor is associated with the core the holoenzyme is formed, which can initiate transcription.

It carries out the reaction RNA(n) + a ribonucleoside 5'-triphosphate = RNA(n+1) + diphosphate. DNA-dependent RNA polymerase catalyzes the transcription of DNA into RNA using the four ribonucleoside triphosphates as substrates. This is DNA-directed RNA polymerase subunit alpha from Clavibacter sepedonicus (Clavibacter michiganensis subsp. sepedonicus).